A 246-amino-acid polypeptide reads, in one-letter code: uncharacterized protein (246 aa).

Positions 204 to 243 form a coiled coil; that stretch reads TTKLKKLEKEIHELPYMLINGKITYEEYKKRIREIEKEIG.

This is an uncharacterized protein from Aquifex aeolicus (strain VF5).